Here is a 104-residue protein sequence, read N- to C-terminus: Large ribosomal subunit protein uL24 (104 aa).

It belongs to the universal ribosomal protein uL24 family. Part of the 50S ribosomal subunit.

One of two assembly initiator proteins, it binds directly to the 5'-end of the 23S rRNA, where it nucleates assembly of the 50S subunit. Its function is as follows. One of the proteins that surrounds the polypeptide exit tunnel on the outside of the subunit. This Shewanella sp. (strain W3-18-1) protein is Large ribosomal subunit protein uL24.